The following is a 345-amino-acid chain: Ferredoxin--NADP reductase (345 aa).

Residues Asp-38, Gln-46, Tyr-51, Val-91, Phe-129, Asp-295, and Thr-336 each coordinate FAD.

This sequence belongs to the ferredoxin--NADP reductase type 2 family. As to quaternary structure, homodimer. FAD is required as a cofactor.

It catalyses the reaction 2 reduced [2Fe-2S]-[ferredoxin] + NADP(+) + H(+) = 2 oxidized [2Fe-2S]-[ferredoxin] + NADPH. The chain is Ferredoxin--NADP reductase from Rhodospirillum rubrum (strain ATCC 11170 / ATH 1.1.1 / DSM 467 / LMG 4362 / NCIMB 8255 / S1).